The chain runs to 317 residues: Protein CbxX, chromosomal (317 aa).

Positions M1–P21 are disordered. An ATP-binding site is contributed by G85 to T92.

This sequence belongs to the CbxX/CfxQ family.

In terms of biological role, seems to be necessary for the expression of RuBisCO. The sequence is that of Protein CbxX, chromosomal (cbxXC) from Cupriavidus necator (strain ATCC 17699 / DSM 428 / KCTC 22496 / NCIMB 10442 / H16 / Stanier 337) (Ralstonia eutropha).